The sequence spans 335 residues: MLRDIPFFWRKRCWQSWVLLPLSLIFRALVLLRRQLYRLGVIASYRAPVPVIVVGNVTVGGNGKTPLVIALVNALQEKGWKVGVISRGYGGNRRKPVLVNEKSDVRTVGDEPLLIHQKTRAPVSVYYRRQRAIENLLMHFPETELIISDDGLQHYALQYDCALLAIAADFGLGNGFCLPAGALREPLPPFATIDAIITTGKMSTALPISAPQFVTTFKNDQFYRSNGERISIETLKENPLYVVTAIARPERFLNRLHALGISPVISKIFADHAMLHESMLTFAADGLILMTTKDQVKTQNWSAFWQEKIIVLSDELTIDEELISLILSCATRTRK.

Position 58-65 (58-65) interacts with ATP; sequence TVGGNGKT.

The protein belongs to the LpxK family.

It catalyses the reaction a lipid A disaccharide + ATP = a lipid IVA + ADP + H(+). It functions in the pathway glycolipid biosynthesis; lipid IV(A) biosynthesis; lipid IV(A) from (3R)-3-hydroxytetradecanoyl-[acyl-carrier-protein] and UDP-N-acetyl-alpha-D-glucosamine: step 6/6. Functionally, transfers the gamma-phosphate of ATP to the 4'-position of a tetraacyldisaccharide 1-phosphate intermediate (termed DS-1-P) to form tetraacyldisaccharide 1,4'-bis-phosphate (lipid IVA). In Dichelobacter nodosus (strain VCS1703A), this protein is Tetraacyldisaccharide 4'-kinase.